A 1485-amino-acid chain; its full sequence is Chromosome partition protein MukB (1485 aa).

ATP is bound at residue 34 to 41 (GGNGAGKS). 6 coiled-coil regions span residues 337-480 (LNLV…QAYQ), 509-605 (QHLA…PVWL), 780-805 (RAARENRLETLYQERDRLAERYATLS), 835-915 (EAEI…IQQH), 977-1116 (GMLT…AKAG), and 1210-1235 (EAIEQMEIELGRLTEELTAREQKLAI). Residues 666–783 (PSGAEDARLI…EVPLFGRAAR (118 aa)) are flexible hinge.

The protein belongs to the SMC family. MukB subfamily. In terms of assembly, homodimerization via its hinge domain. Binds to DNA via its C-terminal region. Interacts, and probably forms a ternary complex, with MukE and MukF via its C-terminal region. The complex formation is stimulated by calcium or magnesium. Interacts with tubulin-related protein FtsZ.

It is found in the cytoplasm. The protein resides in the nucleoid. In terms of biological role, plays a central role in chromosome condensation, segregation and cell cycle progression. Functions as a homodimer, which is essential for chromosome partition. Involved in negative DNA supercoiling in vivo, and by this means organize and compact chromosomes. May achieve or facilitate chromosome segregation by condensation DNA from both sides of a centrally located replisome during cell division. This is Chromosome partition protein MukB from Yersinia pestis bv. Antiqua (strain Antiqua).